A 152-amino-acid polypeptide reads, in one-letter code: MAPKAEKKPAAKKPAEEEPAAEKAPAAGKKPKAEKRLPAGKGEKGGAGEGKKAGRKKGKKSVETYKIYIFKVLKQVHPDIGISSKAMSIMNSFINDIFEKLAAEAAKLARYNKKPTITSREIQTSVRLVLPGELAKHAVSEGTKAVTKFTSA.

Composition is skewed to basic and acidic residues over residues 1–16 (MAPK…KPAE) and 34–52 (EKRL…EGKK). Residues 1–59 (MAPKAEKKPAAKKPAEEEPAAEKAPAAGKKPKAEKRLPAGKGEKGGAGEGKKAGRKKGK) form a disordered region. Lys7 and Lys35 each carry N6-acetyllysine. Lys148 is covalently cross-linked (Glycyl lysine isopeptide (Lys-Gly) (interchain with G-Cter in ubiquitin)).

Belongs to the histone H2B family. As to quaternary structure, the nucleosome is a histone octamer containing two molecules each of H2A, H2B, H3 and H4 assembled in one H3-H4 heterotetramer and two H2A-H2B heterodimers. The octamer wraps approximately 147 bp of DNA. In terms of processing, can be acetylated to form H2BK6ac and H2BK33ac. Post-translationally, monoubiquitinated by BRE1 to form H2BK143ub1 and deubiquitinated by UBP26. Required for heterochromatic histone H3 di- and trimethylation at H3K4me. May give a specific tag for epigenetic transcriptional activation.

The protein localises to the nucleus. Its subcellular location is the chromosome. In terms of biological role, core component of nucleosome. Nucleosomes wrap and compact DNA into chromatin, limiting DNA accessibility to the cellular machineries which require DNA as a template. Histones thereby play a central role in transcription regulation, DNA repair, DNA replication and chromosomal stability. DNA accessibility is regulated via a complex set of post-translational modifications of histones, also called histone code, and nucleosome remodeling. The protein is Histone H2B.9 (H2B.9) of Oryza sativa subsp. indica (Rice).